The following is a 571-amino-acid chain: Leucine aminopeptidase A1, chloroplastic (571 aa).

A chloroplast-targeting transit peptide spans 1-53; sequence MATLRVSSLFASSSSSLHSNPSVFTKYQSSPKWAFSFPVTPLCSKRSKRIVHC. Lys-342 and Asp-347 together coordinate Mg(2+). Lys-354 is a catalytic residue. Positions 367, 427, and 429 each coordinate Mg(2+). Arg-431 is an active-site residue.

This sequence belongs to the peptidase M17 family. In terms of assembly, homohexamer (dimer of homotrimers). Requires Mg(2+) as cofactor. In terms of tissue distribution, observed during floral development. Expressed in healthy and senescent leaves, cotyledons (emergence from seed coats), pistils, sepals, petals, stamens, and floral buds (at protein level). Present at very low levels in healthy leaves.

The protein resides in the plastid. The protein localises to the chloroplast. The catalysed reaction is Release of an N-terminal amino acid, Xaa-|-Yaa-, in which Xaa is preferably Leu, but may be other amino acids including Pro although not Arg or Lys, and Yaa may be Pro. Amino acid amides and methyl esters are also readily hydrolyzed, but rates on arylamides are exceedingly low.. The enzyme catalyses Release of N-terminal proline from a peptide.. Its function is as follows. Catalyzes the removal of unsubstituted N-terminal amino acids from various peptides. When associated as homohexamer, catalyzes the proteolyzes of Xaa-Leu dipeptides. Possesses leucine aminopeptidase activity against the model substrate leucine-amido methyl coumarin. Presumably involved in the processing and regular turnover of intracellular proteins. Regulates wound signaling and has a role in insect defense. Functions as a molecular chaperone to protect proteins from heat-induced damage. The protein is Leucine aminopeptidase A1, chloroplastic of Solanum lycopersicum (Tomato).